The primary structure comprises 652 residues: MINRLIQRIVPFSRPLSTVKKTMLTPFLESKRPQQSPEYDYSTLSNYKSFQIKHTTLNFLLSFEKSTVSGDVVFDLTTLKEAVKHIDLDTSYLDVNEVLVDDKPVEFKIEERKQPLGSKLVIAAELEAERQFKLRVKFSTTKDCTALQWLTPQQTSGDKPYMFSQLEAIHARALFPCFDTPSYKSTFTANIESTLPVVFSGIATGSTPNGESTVYHFKQDIPIPAYLVGIASGDLVSASIGPRSKVYTEPHRLDDCVWEFSNDVEKFIKTAENLIFDYEWGTYDILVNVDSYPYGGMESPNMTFATPTLIAHDKTNIDVIAHELAHSWSGNLVTNCSWNHFWLNEGWTVYIERRIVGALHGEPTRHFSALIGWSDLENSINSMRNPEKFSTLVQNLNDGTDPDDAFSTVPYEKGFNLLFHLETVLGGPQEFDPFIRHYFKKFARQSLDTFQFLDTLFEFFENKREILENVDWETWLFKPGMPPKPQFITTMADNVFSLVNKWIVKAQELKTTEEFSKEFSESDLSEFNSNQVVLFLEELVAQNCVPVESKIEWSKYSVASESLLSIYKKQVTESQNAEVVFKNYKFQTTARIQPSYQQLANWLGTVGRMKFVRPGYRLLNAVDRDLAIATFEKLKDTYHPICKQLVKQDLEL.

Residues 165–167 (QLE) and 293–298 (PYGGME) contribute to the a peptide site. His-322 contributes to the Zn(2+) binding site. Glu-323 acts as the Proton acceptor in catalysis. Residues His-326 and Glu-345 each coordinate Zn(2+). Tyr-411 serves as the catalytic Proton donor.

This sequence belongs to the peptidase M1 family. Zn(2+) serves as cofactor.

Its subcellular location is the cytoplasm. It is found in the nucleus. It carries out the reaction an epoxide + H2O = an ethanediol. In terms of biological role, aminopeptidase that preferentially cleaves di- and tripeptides. Also has low epoxide hydrolase activity (in vitro). Can hydrolyze the epoxide leukotriene LTA(4) but it forms preferentially 5,6-dihydroxy-7,9,11,14-eicosatetraenoic acid rather than the cytokine leukotriene B(4) as the product compared to the homologous mammalian enzyme (in vitro). This chain is Leucine aminopeptidase 2, found in Candida glabrata (strain ATCC 2001 / BCRC 20586 / JCM 3761 / NBRC 0622 / NRRL Y-65 / CBS 138) (Yeast).